The primary structure comprises 472 residues: Phosphoglucosamine mutase (472 aa).

The Phosphoserine intermediate role is filled by Ser-123. 4 residues coordinate Mg(2+): Ser-123, Asp-262, Asp-264, and Asp-266. The residue at position 123 (Ser-123) is a Phosphoserine.

It belongs to the phosphohexose mutase family. Mg(2+) serves as cofactor. In terms of processing, activated by phosphorylation.

The catalysed reaction is alpha-D-glucosamine 1-phosphate = D-glucosamine 6-phosphate. Its function is as follows. Catalyzes the conversion of glucosamine-6-phosphate to glucosamine-1-phosphate. The polypeptide is Phosphoglucosamine mutase (Synechococcus elongatus (strain ATCC 33912 / PCC 7942 / FACHB-805) (Anacystis nidulans R2)).